Consider the following 191-residue polypeptide: Large ribosomal subunit protein bL9 (191 aa).

The segment at 151-191 (AERQAKGESLTSADAIYGVDEDALKPEDFFNPEAEIESEEE) is disordered.

Belongs to the bacterial ribosomal protein bL9 family.

Its function is as follows. Binds to the 23S rRNA. In Sinorhizobium medicae (strain WSM419) (Ensifer medicae), this protein is Large ribosomal subunit protein bL9.